The following is a 792-amino-acid chain: Leucine--tRNA ligase (792 aa).

The 'HIGH' region motif lies at 39–50; that stretch reads PYPSAAGLHLGH. Residues 569-573 carry the 'KMSKS' region motif; it reads KMSKS. ATP is bound at residue Lys572.

Belongs to the class-I aminoacyl-tRNA synthetase family.

It is found in the cytoplasm. It catalyses the reaction tRNA(Leu) + L-leucine + ATP = L-leucyl-tRNA(Leu) + AMP + diphosphate. This Mycoplasma genitalium (strain ATCC 33530 / DSM 19775 / NCTC 10195 / G37) (Mycoplasmoides genitalium) protein is Leucine--tRNA ligase.